A 309-amino-acid polypeptide reads, in one-letter code: MSLRVHTHSPSTQGDMAFNLTILSLTELLSLGGLLGNGVALWLLNQNVYRNPFSIYLLDVACADLIFLCCHMVAIIPELLQDQLNFPEFVHISLIMLRFFCYIVGLSLLVAISTEQCLATLFPSGYLCRRPRYLTTCVCAFIWVLCLLLDLLLSGACTQFFGAPSYHLCGMLWLVVAVLLAALCCTMCVTSLLLLLRVERGPERHQPRGFPTLVLLVILLFLFCGLPFGIFWLSKNLSWHTPLYFYHFSFFMASVHSAAKPAIYFFLGSTPGQRFQEPLRLVLQRALGDEAELGAVREASQGGLVDMTV.

At 1–21 the chain is on the extracellular side; that stretch reads MSLRVHTHSPSTQGDMAFNLT. A glycan (N-linked (GlcNAc...) asparagine) is linked at Asn-19. Residues 22–42 form a helical membrane-spanning segment; it reads ILSLTELLSLGGLLGNGVALW. Topologically, residues 43-59 are cytoplasmic; the sequence is LLNQNVYRNPFSIYLLD. Residues 60–80 traverse the membrane as a helical segment; the sequence is VACADLIFLCCHMVAIIPELL. At 81-91 the chain is on the extracellular side; the sequence is QDQLNFPEFVH. The chain crosses the membrane as a helical span at residues 92 to 112; it reads ISLIMLRFFCYIVGLSLLVAI. Residues 113–132 lie on the Cytoplasmic side of the membrane; sequence STEQCLATLFPSGYLCRRPR. Residues 133-153 form a helical membrane-spanning segment; the sequence is YLTTCVCAFIWVLCLLLDLLL. Residues 154 to 168 lie on the Extracellular side of the membrane; it reads SGACTQFFGAPSYHL. The chain crosses the membrane as a helical span at residues 169–189; the sequence is CGMLWLVVAVLLAALCCTMCV. The Cytoplasmic portion of the chain corresponds to 190 to 212; it reads TSLLLLLRVERGPERHQPRGFPT. Residues 213–233 form a helical membrane-spanning segment; sequence LVLLVILLFLFCGLPFGIFWL. At 234–247 the chain is on the extracellular side; sequence SKNLSWHTPLYFYH. An N-linked (GlcNAc...) asparagine glycan is attached at Asn-236. The chain crosses the membrane as a helical span at residues 248–268; it reads FSFFMASVHSAAKPAIYFFLG. Over 269 to 309 the chain is Cytoplasmic; the sequence is STPGQRFQEPLRLVLQRALGDEAELGAVREASQGGLVDMTV.

Belongs to the G-protein coupled receptor 1 family. Mas subfamily.

It is found in the cell membrane. In terms of biological role, orphan receptor. May regulate nociceptor function and/or development, including the sensation or modulation of pain. The sequence is that of Mas-related G-protein coupled receptor member E (Mrgpre) from Rattus norvegicus (Rat).